A 569-amino-acid polypeptide reads, in one-letter code: Endo-1,4-beta-xylanase 5 (569 aa).

The N-terminal stretch at 1–25 (MKNINNGFFLCMLLLLWCFVHSGIS) is a signal peptide. N-linked (GlcNAc...) asparagine glycosylation is found at N197, N261, and N307. The GH10 domain maps to 209-500 (EQTKPSFLLG…NTATGDVIDK (292 aa)). E332 functions as the Proton donor in the catalytic mechanism. The N-linked (GlcNAc...) asparagine glycan is linked to N346. E439 functions as the Nucleophile in the catalytic mechanism. N-linked (GlcNAc...) asparagine glycans are attached at residues N490, N536, and N544.

Belongs to the glycosyl hydrolase 10 (cellulase F) family.

It carries out the reaction Endohydrolysis of (1-&gt;4)-beta-D-xylosidic linkages in xylans.. Its pathway is glycan degradation; xylan degradation. Binds to and hydrolyzes insoluble and soluble xylan substrates. This is Endo-1,4-beta-xylanase 5 from Arabidopsis thaliana (Mouse-ear cress).